We begin with the raw amino-acid sequence, 376 residues long: Probable dual-specificity RNA methyltransferase RlmN (376 aa).

A disordered region spans residues 1–25 (MSDSERTSLPLVFDEPRGRKKPPRH). Glu-113 functions as the Proton acceptor in the catalytic mechanism. In terms of domain architecture, Radical SAM core spans 119-362 (YPDRATMCVS…PTTVRDTRGR (244 aa)). An intrachain disulfide couples Cys-126 to Cys-368. Residues Cys-133, Cys-137, and Cys-140 each coordinate [4Fe-4S] cluster. Residues 188–189 (GE), Ser-222, 245–247 (SLH), and Asn-325 contribute to the S-adenosyl-L-methionine site. Cys-368 (S-methylcysteine intermediate) is an active-site residue.

This sequence belongs to the radical SAM superfamily. RlmN family. [4Fe-4S] cluster is required as a cofactor.

It localises to the cytoplasm. The enzyme catalyses adenosine(2503) in 23S rRNA + 2 reduced [2Fe-2S]-[ferredoxin] + 2 S-adenosyl-L-methionine = 2-methyladenosine(2503) in 23S rRNA + 5'-deoxyadenosine + L-methionine + 2 oxidized [2Fe-2S]-[ferredoxin] + S-adenosyl-L-homocysteine. The catalysed reaction is adenosine(37) in tRNA + 2 reduced [2Fe-2S]-[ferredoxin] + 2 S-adenosyl-L-methionine = 2-methyladenosine(37) in tRNA + 5'-deoxyadenosine + L-methionine + 2 oxidized [2Fe-2S]-[ferredoxin] + S-adenosyl-L-homocysteine. In terms of biological role, specifically methylates position 2 of adenine 2503 in 23S rRNA and position 2 of adenine 37 in tRNAs. The sequence is that of Probable dual-specificity RNA methyltransferase RlmN from Nocardioides sp. (strain ATCC BAA-499 / JS614).